Reading from the N-terminus, the 158-residue chain is NAD(P)H-quinone oxidoreductase subunit J, chloroplastic (158 aa).

It belongs to the complex I 30 kDa subunit family. As to quaternary structure, NDH is composed of at least 16 different subunits, 5 of which are encoded in the nucleus.

The protein resides in the plastid. Its subcellular location is the chloroplast thylakoid membrane. It catalyses the reaction a plastoquinone + NADH + (n+1) H(+)(in) = a plastoquinol + NAD(+) + n H(+)(out). The catalysed reaction is a plastoquinone + NADPH + (n+1) H(+)(in) = a plastoquinol + NADP(+) + n H(+)(out). In terms of biological role, NDH shuttles electrons from NAD(P)H:plastoquinone, via FMN and iron-sulfur (Fe-S) centers, to quinones in the photosynthetic chain and possibly in a chloroplast respiratory chain. The immediate electron acceptor for the enzyme in this species is believed to be plastoquinone. Couples the redox reaction to proton translocation, and thus conserves the redox energy in a proton gradient. The sequence is that of NAD(P)H-quinone oxidoreductase subunit J, chloroplastic from Lupinus luteus (European yellow lupine).